A 109-amino-acid polypeptide reads, in one-letter code: Oncomodulin (109 aa).

Ser2 is modified (N-acetylserine). EF-hand domains lie at 39–74 (MSASQVKDVFRFIDNDQSGYLDEEELKFFLQKFESG) and 78–109 (LTESETKSLMAAADNDGDGKIGADEFQEMVHS). Positions 52, 54, 56, 58, 63, 91, 93, 95, 97, and 102 each coordinate Ca(2+).

This sequence belongs to the parvalbumin family. In terms of tissue distribution, abundant in the organ of Corti.

In terms of biological role, has some calmodulin-like activity with respect to enzyme activation and growth regulation. Binds two calcium ions. The chain is Oncomodulin (OCM) from Cavia porcellus (Guinea pig).